The chain runs to 240 residues: Putative exosome complex component RRP41 (240 aa).

This sequence belongs to the RNase PH family. Component of the RNA exosome complex.

It localises to the cytoplasm. It is found in the nucleus. The protein localises to the nucleolus. The protein resides in the nucleoplasm. Functionally, non-catalytic component of the RNA exosome complex which has 3'-&gt;5' exoribonuclease activity and participates in a multitude of cellular RNA processing and degradation events. This chain is Putative exosome complex component RRP41 (exos-4.1), found in Caenorhabditis briggsae.